Reading from the N-terminus, the 284-residue chain is Bifunctional protein FolD (284 aa).

NADP(+) contacts are provided by residues 166–168 and Ile232; that span reads GAS.

Belongs to the tetrahydrofolate dehydrogenase/cyclohydrolase family. Homodimer.

The catalysed reaction is (6R)-5,10-methylene-5,6,7,8-tetrahydrofolate + NADP(+) = (6R)-5,10-methenyltetrahydrofolate + NADPH. The enzyme catalyses (6R)-5,10-methenyltetrahydrofolate + H2O = (6R)-10-formyltetrahydrofolate + H(+). It functions in the pathway one-carbon metabolism; tetrahydrofolate interconversion. In terms of biological role, catalyzes the oxidation of 5,10-methylenetetrahydrofolate to 5,10-methenyltetrahydrofolate and then the hydrolysis of 5,10-methenyltetrahydrofolate to 10-formyltetrahydrofolate. The sequence is that of Bifunctional protein FolD from Shewanella sp. (strain MR-7).